A 173-amino-acid polypeptide reads, in one-letter code: Archaemetzincin (173 aa).

Histidine 130 provides a ligand contact to Zn(2+). Glutamate 131 functions as the Proton acceptor in the catalytic mechanism. Histidine 134, histidine 140, cysteine 141, cysteine 146, cysteine 165, and cysteine 168 together coordinate Zn(2+).

It belongs to the peptidase M54 family. As to quaternary structure, monomer. Zn(2+) is required as a cofactor.

Probable zinc metalloprotease whose natural substrate is unknown. In Haloarcula marismortui (strain ATCC 43049 / DSM 3752 / JCM 8966 / VKM B-1809) (Halobacterium marismortui), this protein is Archaemetzincin.